Here is a 356-residue protein sequence, read N- to C-terminus: GDP-mannose:di-myo-inositol-1,3'-phosphate beta-1,2-mannosyltransferase (356 aa).

Belongs to the MDIP synthase family. The cofactor is Mg(2+).

It catalyses the reaction bis(myo-inositol) 1,3'-phosphate + GDP-alpha-D-mannose = 2-O-(beta-D-mannosyl)-bis(myo-inositol) 1,3'-phosphate + GDP + H(+). It carries out the reaction 2-O-(beta-D-mannosyl)-bis(myo-inositol) 1,3'-phosphate + GDP-alpha-D-mannose = 2-O-(beta-D-mannosyl-(1-&gt;2)-beta-D-mannosyl)-bis(myo-inositol) 1,3'-phosphate + GDP + H(+). The catalysed reaction is bis(myo-inositol) 1,3'-phosphate + 2 GDP-alpha-D-mannose = 2-O-(beta-D-mannosyl-(1-&gt;2)-beta-D-mannosyl)-bis(myo-inositol) 1,3'-phosphate + 2 GDP + 2 H(+). Catalyzes the transfer of the mannosyl group from GDP-mannose to di-myo-inositol-1,3'-phosphate (DIP), producing mannosyl-di-myo-inositol phosphate (MDIP). Can also use MDIP as an acceptor of a second mannose residue, yielding di-mannosyl-di-myo-inositol phosphate (MMDIP). The protein is GDP-mannose:di-myo-inositol-1,3'-phosphate beta-1,2-mannosyltransferase of Aquifex aeolicus (strain VF5).